The primary structure comprises 265 residues: Hydroxyethylthiazole kinase (265 aa).

Met-50 contacts substrate. Residues Arg-125 and Thr-171 each coordinate ATP. Gly-198 lines the substrate pocket.

The protein belongs to the Thz kinase family. Requires Mg(2+) as cofactor.

The enzyme catalyses 5-(2-hydroxyethyl)-4-methylthiazole + ATP = 4-methyl-5-(2-phosphooxyethyl)-thiazole + ADP + H(+). Its pathway is cofactor biosynthesis; thiamine diphosphate biosynthesis; 4-methyl-5-(2-phosphoethyl)-thiazole from 5-(2-hydroxyethyl)-4-methylthiazole: step 1/1. Its function is as follows. Catalyzes the phosphorylation of the hydroxyl group of 4-methyl-5-beta-hydroxyethylthiazole (THZ). The polypeptide is Hydroxyethylthiazole kinase (Salmonella newport (strain SL254)).